A 647-amino-acid chain; its full sequence is 2',3'-cyclic-nucleotide 2'-phosphodiesterase/3'-nucleotidase (647 aa).

Positions 1 to 19 (MIKFSATLLATLIAASVNA) are cleaved as a signal peptide. A divalent metal cation is bound by residues Asp-31, His-33, Asp-76, Asn-116, His-225, His-257, and His-259. Residues Tyr-440 and 544–550 (YRAYGGK) each bind substrate.

It belongs to the 5'-nucleotidase family. It depends on a divalent metal cation as a cofactor.

The protein resides in the periplasm. The enzyme catalyses a nucleoside 2',3'-cyclic phosphate + H2O = a nucleoside 3'-phosphate + H(+). It carries out the reaction a ribonucleoside 3'-phosphate + H2O = a ribonucleoside + phosphate. In terms of biological role, this bifunctional enzyme catalyzes two consecutive reactions during ribonucleic acid degradation. Converts a 2',3'-cyclic nucleotide to a 3'-nucleotide and then the 3'-nucleotide to the corresponding nucleoside and phosphate. The protein is 2',3'-cyclic-nucleotide 2'-phosphodiesterase/3'-nucleotidase (cpdB) of Salmonella typhimurium (strain LT2 / SGSC1412 / ATCC 700720).